The chain runs to 381 residues: Dihydroorotate dehydrogenase (quinone) (381 aa).

FMN contacts are provided by residues 74–78 (AGFDK) and Thr98. A substrate-binding site is contributed by Lys78. 123 to 127 (NRMGF) lines the substrate pocket. Residues Asn152 and Asn185 each coordinate FMN. Asn185 serves as a coordination point for substrate. Residue Ser188 is the Nucleophile of the active site. Asn190 contributes to the substrate binding site. Positions 223 and 251 each coordinate FMN. 252 to 253 (NT) contacts substrate. FMN contacts are provided by residues Gly289, Gly318, and 339–340 (YT). The segment at 359 to 381 (RSSPPSPDVTLPPENTPVGQIQA) is disordered.

The protein belongs to the dihydroorotate dehydrogenase family. Type 2 subfamily. As to quaternary structure, monomer. FMN is required as a cofactor.

The protein localises to the cell membrane. The enzyme catalyses (S)-dihydroorotate + a quinone = orotate + a quinol. It functions in the pathway pyrimidine metabolism; UMP biosynthesis via de novo pathway; orotate from (S)-dihydroorotate (quinone route): step 1/1. In terms of biological role, catalyzes the conversion of dihydroorotate to orotate with quinone as electron acceptor. The chain is Dihydroorotate dehydrogenase (quinone) from Synechococcus sp. (strain JA-2-3B'a(2-13)) (Cyanobacteria bacterium Yellowstone B-Prime).